A 118-amino-acid polypeptide reads, in one-letter code: NADH-ubiquinone oxidoreductase chain 3 (118 aa).

The next 3 helical transmembrane spans lie at 5–25, 62–82, and 87–107; these read YIYI…LIFL, LIAI…PWSI, and GSFF…VGFI.

The protein belongs to the complex I subunit 3 family.

It localises to the mitochondrion membrane. The enzyme catalyses a ubiquinone + NADH + 5 H(+)(in) = a ubiquinol + NAD(+) + 4 H(+)(out). In terms of biological role, core subunit of the mitochondrial membrane respiratory chain NADH dehydrogenase (Complex I) that is believed to belong to the minimal assembly required for catalysis. Complex I functions in the transfer of electrons from NADH to the respiratory chain. The immediate electron acceptor for the enzyme is believed to be ubiquinone. The chain is NADH-ubiquinone oxidoreductase chain 3 (ND3) from Acanthamoeba castellanii (Amoeba).